The chain runs to 92 residues: Small ribosomal subunit protein uS19 (92 aa).

It belongs to the universal ribosomal protein uS19 family.

Functionally, protein S19 forms a complex with S13 that binds strongly to the 16S ribosomal RNA. The polypeptide is Small ribosomal subunit protein uS19 (Bacillus pumilus (strain SAFR-032)).